The sequence spans 197 residues: Glycerol-3-phosphate acyltransferase (197 aa).

Transmembrane regions (helical) follow at residues Leu5–Ile25, Leu70–Gly90, Val111–Leu131, and Ile153–Phe173.

This sequence belongs to the PlsY family. As to quaternary structure, probably interacts with PlsX.

The protein resides in the cell membrane. It carries out the reaction an acyl phosphate + sn-glycerol 3-phosphate = a 1-acyl-sn-glycero-3-phosphate + phosphate. Its pathway is lipid metabolism; phospholipid metabolism. Catalyzes the transfer of an acyl group from acyl-phosphate (acyl-PO(4)) to glycerol-3-phosphate (G3P) to form lysophosphatidic acid (LPA). This enzyme utilizes acyl-phosphate as fatty acyl donor, but not acyl-CoA or acyl-ACP. This Geobacillus sp. (strain WCH70) protein is Glycerol-3-phosphate acyltransferase.